The following is a 200-amino-acid chain: 3-isopropylmalate dehydratase small subunit (200 aa).

This sequence belongs to the LeuD family. LeuD type 1 subfamily. In terms of assembly, heterodimer of LeuC and LeuD.

The enzyme catalyses (2R,3S)-3-isopropylmalate = (2S)-2-isopropylmalate. Its pathway is amino-acid biosynthesis; L-leucine biosynthesis; L-leucine from 3-methyl-2-oxobutanoate: step 2/4. Functionally, catalyzes the isomerization between 2-isopropylmalate and 3-isopropylmalate, via the formation of 2-isopropylmaleate. The chain is 3-isopropylmalate dehydratase small subunit from Haemophilus influenzae (strain PittEE).